A 347-amino-acid chain; its full sequence is MKPPILIIIMFTVISGTIMVLMSSHWLMIWIGFEMNMLAIIPILMKKYNPRAVEAATKYFLTQATASMLLMLGIIMNLLLTGQWAVLSTLNPIVSNTMTVALAMKLGLSPFHFWVPEVTQGIPLLSGMVLLTWQKIAPLSILYQMAPSMNPHLLMTMALMSVLVGGWGGLNQTQLRKILAYSSIAHMGWMIAVMTYSPTLMLLNLSIYITMTLGTFMLFMFNSSTTTLSLSLTWNKLPLITSLILIIMLSLGGLPPLSGFIPKWMIIHELTKNNMIITTMLMTITALLNLYFYMRLTYATALTMFPSTNNMKMKWQFESTKNMTMLPPLIVISTMLLPLTPMMSTLF.

A run of 9 helical transmembrane segments spans residues 3–23, 25–45, 67–87, 150–170, 178–198, 201–221, 237–257, 274–294, and 323–343; these read PPIL…VLMS, HWLM…PILM, SMLL…WAVL, NPHL…WGGL, ILAY…TYSP, MLLN…LFMF, LPLI…LPPL, NMII…YFYM, and MTML…TPMM.

The protein belongs to the complex I subunit 2 family. Core subunit of respiratory chain NADH dehydrogenase (Complex I) which is composed of 45 different subunits. Interacts with TMEM242.

The protein resides in the mitochondrion inner membrane. The catalysed reaction is a ubiquinone + NADH + 5 H(+)(in) = a ubiquinol + NAD(+) + 4 H(+)(out). Its function is as follows. Core subunit of the mitochondrial membrane respiratory chain NADH dehydrogenase (Complex I) which catalyzes electron transfer from NADH through the respiratory chain, using ubiquinone as an electron acceptor. Essential for the catalytic activity and assembly of complex I. The sequence is that of NADH-ubiquinone oxidoreductase chain 2 from Mustela kathiah (Yellow-bellied weasel).